Consider the following 477-residue polypeptide: Epoxyalcohol synthase CYP5164B1 (477 aa).

Residue Cys-421 coordinates heme.

Belongs to the cytochrome P450 family. The cofactor is heme.

It catalyses the reaction (9S)-hydroperoxy-(10E,12Z)-octadecadienoate = (11S)-hydroxy-(9S,10S)-epoxy-(12Z)-octadecenoate. The catalysed reaction is (13S)-hydroperoxy-(9Z,11E)-octadecadienoate = 11-hydroxy-12,13-epoxy-(9Z)-octadecenoate. It participates in lipid metabolism; oxylipin biosynthesis. Its function is as follows. Cytochrome P450 epoxyalcohol synthase involved in the metabolism of oxylipins 'ectocarpins' natural products, such as hybridalactone, ecklonilactones and derivatives. Isomerizes the hydroperoxides into epoxyalcohols via epoxyallylic radical. Can use linoleic acid 9-hydroperoxide ((9S,10E,12Z)-9-hydroperoxy-10,12-octadecadienoic, 9-HPOD) as preferred substrate to produce (9S,10S,11S,12Z)-9,10-epoxy-11-hydroxy-12-octadecenoic acid and, to a lower extent, active with linoleate 13-hydroperoxide ((9Z,11E,13S)-13-hydroperoxy-9,11-octadecadienoic, 13-HPOD) to produce 11-hydroxy-12,13-epoxy-9-octadecenoic acid. No activity toward alpha-linolenic acid 9- and 13-hydroperoxides, and toward eicosapentaenoic acid 15-hydroperoxide. The protein is Epoxyalcohol synthase CYP5164B1 of Ectocarpus siliculosus (Brown alga).